The following is a 158-amino-acid chain: NADPH-dependent 7-cyano-7-deazaguanine reductase (158 aa).

Residue Cys-56 is the Thioimide intermediate of the active site. Asp-63 functions as the Proton donor in the catalytic mechanism. Substrate-binding positions include 78 to 80 (VES) and 97 to 98 (HE).

The protein belongs to the GTP cyclohydrolase I family. QueF type 1 subfamily.

The protein resides in the cytoplasm. The enzyme catalyses 7-aminomethyl-7-carbaguanine + 2 NADP(+) = 7-cyano-7-deazaguanine + 2 NADPH + 3 H(+). Its pathway is tRNA modification; tRNA-queuosine biosynthesis. Functionally, catalyzes the NADPH-dependent reduction of 7-cyano-7-deazaguanine (preQ0) to 7-aminomethyl-7-deazaguanine (preQ1). In Rhodopseudomonas palustris (strain HaA2), this protein is NADPH-dependent 7-cyano-7-deazaguanine reductase.